Reading from the N-terminus, the 513-residue chain is Ankyrin repeat-containing protein YIL001W (513 aa).

2 ANK repeats span residues 8-37 (KNFE…NVNS) and 41-70 (FDNS…VCDR). BTB domains lie at 122–179 (RDIT…KFLY) and 274–360 (PDVQ…DIPW).

In Saccharomyces cerevisiae (strain ATCC 204508 / S288c) (Baker's yeast), this protein is Ankyrin repeat-containing protein YIL001W.